Consider the following 704-residue polypeptide: SH3KBP1-binding protein 1 (704 aa).

An N-acetylalanine modification is found at Ala-2. Positions 19–88 constitute a BTB domain; it reads EVIHLNVGGK…LRTKELDPRG (70 aa). The interval 146-165 is disordered; that stretch reads VGPQQIGGRPAPVRRSNTMP. At Thr-163 the chain carries Phosphothreonine. WD repeat units lie at residues 233–280, 283–322, 324–359, 428–466, and 548–586; these read RLDW…GGSE, VFHL…WQVQ, VQPI…LRMK, VHRS…GMIS, and LECE…DGLG. Residues 609–704 form a disordered region; the sequence is PLASSRGSFP…LKKTLNETSF (96 aa). A compositionally biased stretch (low complexity) spans 612–631; sequence SSRGSFPSPSPRTSLTSLHS. The short motif at 618–623 is the PXXXPR element; it reads PSPSPR. 2 positions are modified to phosphoserine: Ser-644 and Ser-646. The PXXXPR signature appears at 678–683; it reads PTPAPR. Phosphothreonine is present on Thr-693.

It belongs to the KCTD3 family. In terms of assembly, monomer. Interacts with CUL3; interaction is direct and forms a 5:5 heterodecamer. Interacts (via PXXXPR motifs) with SH3KBP1 (via SH3 domains). Directly interacts with cathepsin B/CTSB.

Its subcellular location is the lysosome. Inhibits CBL-SH3KBP1 complex mediated down-regulation of EGFR signaling by sequestration of SH3KBP1. Binds to SH3KBP1 and prevents its interaction with CBL and inhibits translocation of SH3KBP1 to EGFR containing vesicles upon EGF stimulation. This is SH3KBP1-binding protein 1 (Shkbp1) from Mus musculus (Mouse).